The chain runs to 363 residues: MDSAVDGPRQPPARAGSRLCTRCGERKAALKRPKTLEQICRECFYVVFEDEIHQTIVDNNLFKPGDRVAIGASGGKDSTVLAYVLSELNRRHKYCLDLFLLSVDEGITGYRDDSLETVKRNEIQYGLPLKIVSYKDLYGWTMDDIVKAIGLKNNCTFCGVFRRQALDRGAALLKVDKIVTGHNADDIAETVLLNILRGDIARLSRCTFITTGEDGPIPRCKPFKYTYEKEIVMYAYFKKLDYFSTECIYSPNAYRGFAREFIKDLERMRPRAILDIIKSGENFRISTTTRMPEQGTCERCGYISSQKLCKACVLLDGLNRGLPKLGIGRTKGIAGGDGDCEQQATRSERNRSSLQGKHGNFDF.

The tract at residues 337–363 (DGDCEQQATRSERNRSSLQGKHGNFDF) is disordered.

This sequence belongs to the TtcA family. CTU1/NCS6/ATPBD3 subfamily.

Its subcellular location is the cytoplasm. Its pathway is tRNA modification; 5-methoxycarbonylmethyl-2-thiouridine-tRNA biosynthesis. Its function is as follows. Plays a central role in 2-thiolation of mcm(5)S(2)U at tRNA wobble positions of tRNA(Lys), tRNA(Glu) and tRNA(Gln). Directly binds tRNAs and probably acts by catalyzing adenylation of tRNAs, an intermediate required for 2-thiolation. It is unclear whether it acts as a sulfurtransferase that transfers sulfur from thiocarboxylated URM1 onto the uridine of tRNAs at wobble position. In Oryza sativa subsp. japonica (Rice), this protein is Cytoplasmic tRNA 2-thiolation protein 1.